Consider the following 111-residue polypeptide: Nucleoid-associated protein NMCC_1355 (111 aa).

Belongs to the YbaB/EbfC family. Homodimer.

It is found in the cytoplasm. The protein localises to the nucleoid. Binds to DNA and alters its conformation. May be involved in regulation of gene expression, nucleoid organization and DNA protection. This Neisseria meningitidis serogroup C (strain 053442) protein is Nucleoid-associated protein NMCC_1355.